A 158-amino-acid chain; its full sequence is Cyclic pyranopterin monophosphate synthase (158 aa).

Substrate is bound by residues 74–76 (MCH) and 112–113 (ME). Residue aspartate 127 is part of the active site.

The protein belongs to the MoaC family. As to quaternary structure, homohexamer; trimer of dimers.

It catalyses the reaction (8S)-3',8-cyclo-7,8-dihydroguanosine 5'-triphosphate = cyclic pyranopterin phosphate + diphosphate. The protein operates within cofactor biosynthesis; molybdopterin biosynthesis. In terms of biological role, catalyzes the conversion of (8S)-3',8-cyclo-7,8-dihydroguanosine 5'-triphosphate to cyclic pyranopterin monophosphate (cPMP). The polypeptide is Cyclic pyranopterin monophosphate synthase (Helicobacter pylori (strain HPAG1)).